Reading from the N-terminus, the 414-residue chain is MNELLEKAERLKTASQTLAMLSTEEKNAALEQIAKAIDRKRAVILAENEKDMAAGRSQGLSPALLDRLQLTNERIDQIISGVRQVASLPDPVGDIIEEWTRPNGLRIQTVRVPLGVIGMVYEARPNVTVDAVSLCLKTGNAVLLRGSSSALHSNKALVSVMKEALRTTAIPETAIELLEDTSRETAQRMFRLNDYLDVLIPRGGAGLIRSVVENATVPVLETGVGNCHIFVDESAERSMAIDIVLNAKLQRPSVCNAIETVLIHERWPYVGELLEALHARGVELRGDRRLAAAYPFVTEATEEDWHTEYLAPILAIKLVTDVDEAIQHIHRYGTKHSEAIITENEAHVRRFFQAVDAAVLYHNASTRFTDGEQFGYGAEIGISTQKLHARGPMGLVAITTTKSLVYGTGQIRTV.

The protein belongs to the gamma-glutamyl phosphate reductase family.

Its subcellular location is the cytoplasm. The catalysed reaction is L-glutamate 5-semialdehyde + phosphate + NADP(+) = L-glutamyl 5-phosphate + NADPH + H(+). The protein operates within amino-acid biosynthesis; L-proline biosynthesis; L-glutamate 5-semialdehyde from L-glutamate: step 2/2. In terms of biological role, catalyzes the NADPH-dependent reduction of L-glutamate 5-phosphate into L-glutamate 5-semialdehyde and phosphate. The product spontaneously undergoes cyclization to form 1-pyrroline-5-carboxylate. In Geobacillus thermodenitrificans (strain NG80-2), this protein is Gamma-glutamyl phosphate reductase.